Consider the following 548-residue polypeptide: Chaperonin GroEL (548 aa).

ATP-binding positions include 30-33, Lys-51, 87-91, Gly-415, 479-481, and Asp-495; these read TLGP, DGTTT, and NAA.

Belongs to the chaperonin (HSP60) family. As to quaternary structure, forms a cylinder of 14 subunits composed of two heptameric rings stacked back-to-back. Interacts with the co-chaperonin GroES.

Its subcellular location is the cytoplasm. It catalyses the reaction ATP + H2O + a folded polypeptide = ADP + phosphate + an unfolded polypeptide.. Functionally, together with its co-chaperonin GroES, plays an essential role in assisting protein folding. The GroEL-GroES system forms a nano-cage that allows encapsulation of the non-native substrate proteins and provides a physical environment optimized to promote and accelerate protein folding. The chain is Chaperonin GroEL from Pseudomonas fluorescens (strain SBW25).